Here is a 75-residue protein sequence, read N- to C-terminus: Conotoxin ar11a (75 aa).

Positions 1–19 (MKLCATFLLVLVTLPLVTG) are cleaved as a signal peptide. The propeptide occupies 20-36 (EKSSERSLSGAILRGVR). 4 cysteine pairs are disulfide-bonded: C39–C53, C46–C58, C52–C63, and C57–C70.

In terms of tissue distribution, expressed by the venom duct.

The protein localises to the secreted. In terms of biological role, both natural (L-Leu form) and synthetic (D-Leu from) peptides equally cause sensitivity to touch and body tremor. Neither L-Leu form nor D-Leu form is active on nerve-muscle preparation. The chain is Conotoxin ar11a from Conus arenatus (Sand-dusted cone).